A 773-amino-acid chain; its full sequence is Transducin-like enhancer protein 4 (773 aa).

Disordered stretches follow at residues M1–Q22, H140–P162, and L182–L360. Positions M1 to Q136 are q domain. The GP domain stretch occupies residues H137–S204. Over residues P183–I202 the composition is skewed to basic and acidic residues. The segment covering K203–S212 has biased composition (low complexity). The tract at residues S205–P274 is ccN domain. 3 positions are modified to phosphoserine: S208, S212, and S222. The segment covering G215–D252 has biased composition (basic and acidic residues). K237 carries the N6-acetyllysine modification. Residues S245, S250, S269, and S273 each carry the phosphoserine modification. Over residues S273–A289 the composition is skewed to basic and acidic residues. The SP domain stretch occupies residues R275–H452. The residue at position 281 (K281) is an N6-acetyllysine. Over residues P290 to S305 the composition is skewed to low complexity. S292 bears the Phosphoserine mark. A compositionally biased stretch (polar residues) spans T317–P328. A Phosphothreonine modification is found at T318. Phosphoserine occurs at positions 321 and 323. A phosphothreonine mark is found at T325, T327, T334, and T340. Residue S419 is modified to Phosphoserine. WD repeat units follow at residues N485–P523, N531–K570, S575–Q614, G617–Q656, D658–L697, L699–Q738, and K740–Y773.

It belongs to the WD repeat Groucho/TLE family. As to quaternary structure, homooligomer and heterooligomer with other family members. Interacts with PAX5. Interacts with LEF1, TCF7, TCF7L1 and TCF7L2. Interacts with ZNF703; TLE4 may mediate ZNF703 transcriptional repression. Interacts with SIX3 and SIX6. Interacts with PAX2. Interacts with TLE1. Phosphorylated. PAX5 binding increases phosphorylation. In terms of processing, ubiquitinated by XIAP/BIRC4. In terms of tissue distribution, in all tissues examined, mostly in brain, and muscle.

The protein localises to the nucleus. Transcriptional corepressor that binds to a number of transcription factors. Inhibits the transcriptional activation mediated by PAX5, and by CTNNB1 and TCF family members in Wnt signaling. The effects of full-length TLE family members may be modulated by association with dominant-negative AES. Essential for the transcriptional repressor activity of SIX3 during retina and lens development and for SIX3 transcriptional auto-repression. Involved in transcriptional repression of GNRHR and enhances MSX1-mediated transcriptional repression of CGA/alpha-GSU. This Homo sapiens (Human) protein is Transducin-like enhancer protein 4 (TLE4).